We begin with the raw amino-acid sequence, 172 residues long: Glutamyl-tRNA(Gln) amidotransferase subunit C-3, mitochondrial (172 aa).

The segment at 49-71 (KHPSKVPQRPNKSTIDGQSTPTR) is disordered. Residues 58–71 (PNKSTIDGQSTPTR) are compositionally biased toward polar residues.

It belongs to the GatC family. Subunit of the heterotrimeric GatCAB amidotransferase (AdT) complex, composed of A, B and C subunits.

The protein resides in the mitochondrion. It catalyses the reaction L-glutamyl-tRNA(Gln) + L-glutamine + ATP + H2O = L-glutaminyl-tRNA(Gln) + L-glutamate + ADP + phosphate + H(+). Functionally, allows the formation of correctly charged Gln-tRNA(Gln) through the transamidation of misacylated Glu-tRNA(Gln) in the mitochondria. The reaction takes place in the presence of glutamine and ATP through an activated gamma-phospho-Glu-tRNA(Gln). This is Glutamyl-tRNA(Gln) amidotransferase subunit C-3, mitochondrial from Culex quinquefasciatus (Southern house mosquito).